The sequence spans 237 residues: Ribitol-5-phosphate cytidylyltransferase (237 aa).

Residues 7–10 (LAGG) and 80–86 (GEDRNET) each bind CTP.

Belongs to the IspD/TarI cytidylyltransferase family. TarI subfamily.

The enzyme catalyses D-ribitol 5-phosphate + CTP + H(+) = CDP-L-ribitol + diphosphate. It functions in the pathway cell wall biogenesis; poly(ribitol phosphate) teichoic acid biosynthesis. In terms of biological role, catalyzes the transfer of the cytidylyl group of CTP to D-ribitol 5-phosphate. The chain is Ribitol-5-phosphate cytidylyltransferase from Listeria monocytogenes serotype 4b (strain F2365).